We begin with the raw amino-acid sequence, 242 residues long: MTGKVILVGAGPGDPELITIKGLKAIKEADVVVYDDLISKELLNYAKKDAELIYVGKRKGKHSFKQEEINKILVEKAKEGKLVVRLKGGDPFVFGRGGEEILELKKHNIPYEVIPGITSAIAVPEVAGIPVTHRKVATSFTVVTGHEAEDKKEKQVDLSKLNADTIVILMGITNLENLVKELLQNPKRSKETPVAIIMEGTTKNQRVIKGTLGDIVEKAKKENARPPGVIVVGEVVNVLDSQ.

S-adenosyl-L-homocysteine is bound by residues Pro12, 88-90, 118-119, and Met170; these read GGD and TS.

The protein belongs to the precorrin methyltransferase family. Homodimer.

The catalysed reaction is uroporphyrinogen III + 2 S-adenosyl-L-methionine = precorrin-2 + 2 S-adenosyl-L-homocysteine + H(+). It functions in the pathway cofactor biosynthesis; adenosylcobalamin biosynthesis; precorrin-2 from uroporphyrinogen III: step 1/1. Catalyzes the two successive C-2 and C-7 methylation reactions involved in the conversion of uroporphyrinogen III to precorrin-2 via the intermediate formation of precorrin-1. It is a step in the biosynthesis of both cobalamin (vitamin B12) and coenzyme F430. The polypeptide is Uroporphyrinogen-III C-methyltransferase (cobA) (Methanocaldococcus jannaschii (strain ATCC 43067 / DSM 2661 / JAL-1 / JCM 10045 / NBRC 100440) (Methanococcus jannaschii)).